The primary structure comprises 503 residues: Plant-specific TFIIB-related protein 1 (503 aa).

The TFIIB-type zinc-finger motif lies at 1 to 33 (MKCPYCSSAQGRCTTTSSGRSITECSSCGRVME). Disordered regions lie at residues 328 to 366 (PEKA…AKPI), 411 to 431 (NAMD…LGDK), 436 to 455 (IYLR…TGIS), and 468 to 503 (GSSS…HGDF). A compositionally biased stretch (low complexity) spans 333 to 346 (PTTTISTTRSTTPR). Basic and acidic residues predominate over residues 355–366 (FVEKDKPSAKPI).

In terms of processing, ubiquinated. Subsequent degradation by the proteasome pathway. Widely expressed.

The protein resides in the plastid. It localises to the chloroplast outer membrane. It is found in the nucleus. Plant-specific TFIIB-related protein that may be involved in an intracellular signaling pathway between plastids and the nucleus. May act as general transcription factor (GTF) of RNA polymerase I-dependent transcription and rRNA synthesis. Forms a ternary complex with TBP2 and the rDNA promoter region. In Arabidopsis thaliana (Mouse-ear cress), this protein is Plant-specific TFIIB-related protein 1.